We begin with the raw amino-acid sequence, 122 residues long: Large ribosomal subunit protein uL14 (122 aa).

This sequence belongs to the universal ribosomal protein uL14 family. As to quaternary structure, part of the 50S ribosomal subunit. Forms a cluster with proteins L3 and L19. In the 70S ribosome, L14 and L19 interact and together make contacts with the 16S rRNA in bridges B5 and B8.

Binds to 23S rRNA. Forms part of two intersubunit bridges in the 70S ribosome. In Caldicellulosiruptor saccharolyticus (strain ATCC 43494 / DSM 8903 / Tp8T 6331), this protein is Large ribosomal subunit protein uL14.